A 365-amino-acid polypeptide reads, in one-letter code: MSLIRKKGFYKQDVNKTAWELPKTYVSPTHVGSGAYGSVCSAIDKRSGEKVAIKKLSRPFQSEIFAKRAYRELLLLKHMQHENVIGLLDVFTPASSLRNFYDFYLVMPFMQTDLQKIMGMEFSEEKIQYLVYQMLKGLKYIHSAGVVHRDLKPGNLAVNEDCELKILDFGLARHADAEMTGYVVTRWYRAPEVILSWMHYNQTVDIWSVGCIMAEMLTGKTLFKGKDYLDQLTQILKVTGVPGTEFVQKLNDKAAKSYIQSLPQTPRKDFTQLFPRASPQAADLLEKMLELDVDKRLTAAQALTHPFFEPFRDPEEETEAQQPFDDSLEHEKLTVDEWKQHIYKEIVNFSPIARKDSRRRSGMKL.

One can recognise a Protein kinase domain in the interval 25–308; that stretch reads YVSPTHVGSG…AAQALTHPFF (284 aa). Position 31–39 (31–39) interacts with ATP; sequence VGSGAYGSV. Position 47 is a phosphoserine (serine 47). Lysine 54 contributes to the ATP binding site. The active-site Proton acceptor is the aspartate 150. The residue at position 180 (threonine 180) is a Phosphothreonine; by MAP2K3, MAP2K4, MAP2K6 and MAP2K7. The TXY signature appears at 180-182; the sequence is TGY. Tyrosine 182 carries the phosphotyrosine; by MAP2K3, MAP2K4, MAP2K6 and MAP2K7 modification. Position 350 is a phosphoserine (serine 350).

It belongs to the protein kinase superfamily. CMGC Ser/Thr protein kinase family. MAP kinase subfamily. In terms of assembly, interacts with MAPK8IP2. The cofactor is Mg(2+). In terms of processing, dually phosphorylated on Thr-180 and Tyr-182 by MAP2K3/MKK3, MAP2K4/MKK4, MAP2K6/MKK6 and MAP2K7/MKK7, which activates the enzyme. Dephosphorylated by dual specificity phosphatase DUSP1. Expressed in testes, pancreas, small intestine, lung and kidney. Abundant in macrophages, also present in neutrophils, CD4+ T-cells, and endothelial cells.

It carries out the reaction L-seryl-[protein] + ATP = O-phospho-L-seryl-[protein] + ADP + H(+). It catalyses the reaction L-threonyl-[protein] + ATP = O-phospho-L-threonyl-[protein] + ADP + H(+). With respect to regulation, activated by phosphorylation on threonine and tyrosine by dual specificity kinases, MAP2K3/MKK3, MAP2K6/MKK6, MAP2K4/MKK4 and MAP2K7/MKK7. Activation by ultraviolet radiation, hyperosmotic shock, anisomycin or by TNF-alpha is mediated by MAP2K3/MKK3. Inhibited by dual specificity phosphatase DUSP1. In terms of biological role, serine/threonine kinase which acts as an essential component of the MAP kinase signal transduction pathway. MAPK13 is one of the four p38 MAPKs which play an important role in the cascades of cellular responses evoked by extracellular stimuli such as pro-inflammatory cytokines or physical stress leading to direct activation of transcription factors such as ELK1 and ATF2. Accordingly, p38 MAPKs phosphorylate a broad range of proteins and it has been estimated that they may have approximately 200 to 300 substrates each. MAPK13 is one of the less studied p38 MAPK isoforms. Some of the targets are downstream kinases such as MAPKAPK2, which are activated through phosphorylation and further phosphorylate additional targets. Plays a role in the regulation of protein translation by phosphorylating and inactivating EEF2K. Involved in cytoskeletal remodeling through phosphorylation of MAPT and STMN1. Mediates UV irradiation induced up-regulation of the gene expression of CXCL14. Plays an important role in the regulation of epidermal keratinocyte differentiation, apoptosis and skin tumor development. Phosphorylates the transcriptional activator MYB in response to stress which leads to rapid MYB degradation via a proteasome-dependent pathway. MAPK13 also phosphorylates and down-regulates PRKD1 during regulation of insulin secretion in pancreatic beta cells. The chain is Mitogen-activated protein kinase 13 (MAPK13) from Homo sapiens (Human).